The primary structure comprises 218 residues: Peptide deformylase (218 aa).

Fe cation-binding residues include Cys-130 and His-172. The active site involves Glu-173. Fe cation is bound at residue His-176.

Belongs to the polypeptide deformylase family. Requires Fe(2+) as cofactor.

It catalyses the reaction N-terminal N-formyl-L-methionyl-[peptide] + H2O = N-terminal L-methionyl-[peptide] + formate. Functionally, removes the formyl group from the N-terminal Met of newly synthesized proteins. Requires at least a dipeptide for an efficient rate of reaction. N-terminal L-methionine is a prerequisite for activity but the enzyme has broad specificity at other positions. The chain is Peptide deformylase from Bifidobacterium adolescentis (strain ATCC 15703 / DSM 20083 / NCTC 11814 / E194a).